Here is a 1096-residue protein sequence, read N- to C-terminus: Lysine-specific demethylase PHF2 (1096 aa).

The segment at 5 to 56 adopts a PHD-type zinc-finger fold; the sequence is PVYCVCRLPYDVTRFMIECDACKDWFHGSCVGVEEEEAPDIDIYHCPNCEKT. 2 residues coordinate 2-oxoglutarate: T193 and T246. The region spanning 197–353 is the JmjC domain; it reads FSDTRMSSFV…MQMRAYEVER (157 aa). The Fe cation site is built by H249 and D251. The 2-oxoglutarate site is built by Y259 and K266. Residue Y321 coordinates Fe cation. T323 is a binding site for 2-oxoglutarate. The segment at 448–630 is disordered; it reads TVRPEVNAAA…KSPLAGNKDK (183 aa). The residue at position 474 (S474) is a Phosphoserine. At T479 the chain carries Phosphothreonine. The segment covering 503 to 515 has biased composition (pro residues); that stretch reads SKIPKPPKSPKPP. A Phosphoserine modification is found at S536. Basic and acidic residues-rich tracts occupy residues 545–560 and 575–630; these read LEAH…EPPK and DTVH…NKDK. 3 positions are modified to phosphoserine: S651, S677, and S701. A Glycyl lysine isopeptide (Lys-Gly) (interchain with G-Cter in SUMO2) cross-link involves residue K707. K716 bears the N6-acetyllysine mark. 3 disordered regions span residues 719-755, 811-841, and 871-1080; these read LDSA…ESGS, WGTG…KRLL, and YPSL…TAKQ. Position 724 is a phosphotyrosine (Y724). The segment covering 725–753 has biased composition (basic and acidic residues); the sequence is KSDDSSDEGSLHIDTDTKPGRNAKVKKES. S726, S729, S730, and S734 each carry phosphoserine. Phosphoserine is present on residues S873, S876, and S893. The segment covering 910–919 has biased composition (basic and acidic residues); the sequence is RQDRPVREGT. The segment covering 943–953 has biased composition (basic residues); the sequence is NRKKKNTKRKP. A compositionally biased stretch (low complexity) spans 954-1010; sequence APNTASPSISTSASASTGTTSASTTPASTTPASTTPASTTPASTSTASSQASQEGSS. 2 stretches are compositionally biased toward polar residues: residues 1031-1040 and 1054-1065; these read GTFSGSQAGR and RRPSASSPNNTA. A Phosphoserine; by PKA modification is found at S1057.

It belongs to the JHDM1 histone demethylase family. JHDM1D subfamily. In terms of assembly, component of the PHF2-ARID5B complex, at least composed of PHF2 and ARID5B. Interacts with HNF4A and NR1H4. Interacts with RELA. In terms of processing, phosphorylated by PKA on specific serine residues, leading to the formation of an active lysine demethylase complex.

The protein localises to the nucleus. It localises to the nucleolus. The protein resides in the chromosome. It is found in the centromere. Its subcellular location is the kinetochore. It carries out the reaction N(6),N(6)-dimethyl-L-lysyl(9)-[histone H3] + 2-oxoglutarate + O2 = N(6)-methyl-L-lysyl(9)-[histone H3] + formaldehyde + succinate + CO2. Its activity is regulated as follows. Enzymatically inactive by itself, and become active following phosphorylation by PKA. In terms of biological role, lysine demethylase that demethylates both histones and non-histone proteins. Enzymatically inactive by itself, and becomes active following phosphorylation by PKA: forms a complex with ARID5B and mediates demethylation of methylated ARID5B. Demethylation of ARID5B leads to target the PHF2-ARID5B complex to target promoters, where PHF2 mediates demethylation of dimethylated 'Lys-9' of histone H3 (H3K9me2), followed by transcription activation of target genes. The PHF2-ARID5B complex acts as a coactivator of HNF4A in liver. PHF2 is recruited to trimethylated 'Lys-4' of histone H3 (H3K4me3) at rDNA promoters and promotes expression of rDNA. Involved in the activation of toll-like receptor 4 (TLR4)-target inflammatory genes in macrophages by catalyzing the demethylation of trimethylated histone H4 lysine 20 (H4K20me3) at the gene promoters. The polypeptide is Lysine-specific demethylase PHF2 (Phf2) (Mus musculus (Mouse)).